Reading from the N-terminus, the 287-residue chain is U-megalopygitoxin(8)-Mo12 (287 aa).

Positions 1–17 are cleaved as a signal peptide; it reads MNLQYLILSLLSTTVYG. Histidine 284 carries the post-translational modification Histidine amide.

Belongs to the megalysin family. Post-translationally, contains 2 disulfide bonds. In terms of tissue distribution, expressed by the venom apparatus.

The protein localises to the secreted. It localises to the target cell membrane. In terms of biological role, may function as a large pore-forming protein. In Megalopyge opercularis (Southern flannel moth), this protein is U-megalopygitoxin(8)-Mo12.